The sequence spans 477 residues: MAKIIAFDEKARRGLEGGMNQLADAVKVTLGPKGRNVVLEKKWGAPTITNDGVSIAKEIELEDPYEKIGAELVKEVAKKTDDVAGDGTTTATVLAQALVKEGLRNVAAGANPMALKRGIEKAVEAVSGALLEQAKDVETKEQIASTASISAADTQIGELIAEAMDKVGKEGVITVEEFQTFGLELELTEGMGFDKGYISAYFATDMERMEASLDDPYILIANSKIGNVKDLLPLLEKVMQSGKPLLIIAEDVEGEALSTLVVNKIRGTFKSVAVKAPGFGDRRKAMLGDIAILTGGEVISEEVGLKLENAGLDLLGRARKVVITKDETTIVDGAGDTDQVNGRVAQIRAEIENSDSDYDREKLQERLANVAGGVAVIKAGAATEVELKERKERKHRIEDAVRNAKAAVEEGIVAGGGVALLQASQVFEKLELTGDEATGANAVKLALEAPLKQIPSTAVSRAAWSWRRCATSPWATA.

ATP is bound by residues 29–32, 86–90, and Gly416; these read TLGP and DGTTT.

The protein belongs to the chaperonin (HSP60) family. Forms a cylinder of 14 subunits composed of two heptameric rings stacked back-to-back. Interacts with the co-chaperonin GroES.

The protein localises to the cytoplasm. It carries out the reaction ATP + H2O + a folded polypeptide = ADP + phosphate + an unfolded polypeptide.. Together with its co-chaperonin GroES, plays an essential role in assisting protein folding. The GroEL-GroES system forms a nano-cage that allows encapsulation of the non-native substrate proteins and provides a physical environment optimized to promote and accelerate protein folding. In Streptomyces lividans, this protein is Chaperonin GroEL 2.